A 359-amino-acid polypeptide reads, in one-letter code: MTTMSDLDEIMVAEILCRTPMTCLKTVRSVCKKWNALSKKWFFFGKAKQFLGFMMMDSRVCSLRFDLRKDLVVEPPSIKQVSILDQIEVSKIFHSDGLLLCIIKNDTTRLLVWNPYLEQTRWIQPRHNFHILDCYAIGHDKNRKHKILRFVDDFLPVENVVFGGNTYFFAKERYIFEGKGPEEIDITETEDFLLCFDFTAERFGPRLPLPFHSYYAETVTLSCVKEDQLSVLCQRQPSEPSEILEIWVSTNIQPNAVSWSIFLKVDMRPLTGFQFNDMAGSFFIDQENKVAVVFDLDPSQICRYQTAYIIGQEYGGYFNSVNIGEVPNLWIPGSVGYADTTSCIPPVCSSYVPSLVQIG.

Residues 2 to 48 (TTMSDLDEIMVAEILCRTPMTCLKTVRSVCKKWNALSKKWFFFGKAK) enclose the F-box domain.

In Arabidopsis thaliana (Mouse-ear cress), this protein is F-box protein At1g10895.